The primary structure comprises 801 residues: Leucine--tRNA ligase (801 aa).

The short motif at 39 to 50 (PYPSGAGIHVGH) is the 'HIGH' region element. The 'KMSKS' region signature appears at 578–582 (KMSKS). Lysine 581 is a binding site for ATP.

It belongs to the class-I aminoacyl-tRNA synthetase family.

The protein resides in the cytoplasm. It carries out the reaction tRNA(Leu) + L-leucine + ATP = L-leucyl-tRNA(Leu) + AMP + diphosphate. The sequence is that of Leucine--tRNA ligase from Mesoplasma florum (strain ATCC 33453 / NBRC 100688 / NCTC 11704 / L1) (Acholeplasma florum).